Consider the following 337-residue polypeptide: Phenylalanine--tRNA ligase alpha subunit (337 aa).

Glu252 serves as a coordination point for Mg(2+).

It belongs to the class-II aminoacyl-tRNA synthetase family. Phe-tRNA synthetase alpha subunit type 1 subfamily. Tetramer of two alpha and two beta subunits. The cofactor is Mg(2+).

The protein localises to the cytoplasm. The catalysed reaction is tRNA(Phe) + L-phenylalanine + ATP = L-phenylalanyl-tRNA(Phe) + AMP + diphosphate + H(+). The chain is Phenylalanine--tRNA ligase alpha subunit from Saccharophagus degradans (strain 2-40 / ATCC 43961 / DSM 17024).